The chain runs to 60 residues: Large ribosomal subunit protein bL32 (60 aa).

Basic residues predominate over residues 1 to 16 (MAVPRNRHSNARKNIR). Residues 1–20 (MAVPRNRHSNARKNIRRSHD) are disordered.

Belongs to the bacterial ribosomal protein bL32 family.

In Chlamydia pneumoniae (Chlamydophila pneumoniae), this protein is Large ribosomal subunit protein bL32 (rpmF).